The sequence spans 382 residues: 4-hydroxy-3-methylbut-2-en-1-yl diphosphate synthase (flavodoxin) (382 aa).

[4Fe-4S] cluster-binding residues include C290, C293, C327, and E334.

Belongs to the IspG family. Requires [4Fe-4S] cluster as cofactor.

The catalysed reaction is (2E)-4-hydroxy-3-methylbut-2-enyl diphosphate + oxidized [flavodoxin] + H2O + 2 H(+) = 2-C-methyl-D-erythritol 2,4-cyclic diphosphate + reduced [flavodoxin]. Its pathway is isoprenoid biosynthesis; isopentenyl diphosphate biosynthesis via DXP pathway; isopentenyl diphosphate from 1-deoxy-D-xylulose 5-phosphate: step 5/6. In terms of biological role, converts 2C-methyl-D-erythritol 2,4-cyclodiphosphate (ME-2,4cPP) into 1-hydroxy-2-methyl-2-(E)-butenyl 4-diphosphate. The polypeptide is 4-hydroxy-3-methylbut-2-en-1-yl diphosphate synthase (flavodoxin) (Rhodopirellula baltica (strain DSM 10527 / NCIMB 13988 / SH1)).